The sequence spans 185 residues: Acireductone dioxygenase (185 aa).

4 residues coordinate Fe(2+): H101, H103, E107, and H145. Ni(2+) contacts are provided by H101, H103, E107, and H145.

This sequence belongs to the acireductone dioxygenase (ARD) family. Monomer. It depends on Fe(2+) as a cofactor. Ni(2+) is required as a cofactor.

The enzyme catalyses 1,2-dihydroxy-5-(methylsulfanyl)pent-1-en-3-one + O2 = 3-(methylsulfanyl)propanoate + CO + formate + 2 H(+). It carries out the reaction 1,2-dihydroxy-5-(methylsulfanyl)pent-1-en-3-one + O2 = 4-methylsulfanyl-2-oxobutanoate + formate + 2 H(+). It functions in the pathway amino-acid biosynthesis; L-methionine biosynthesis via salvage pathway; L-methionine from S-methyl-5-thio-alpha-D-ribose 1-phosphate: step 5/6. Its function is as follows. Catalyzes 2 different reactions between oxygen and the acireductone 1,2-dihydroxy-3-keto-5-methylthiopentene (DHK-MTPene) depending upon the metal bound in the active site. Fe-containing acireductone dioxygenase (Fe-ARD) produces formate and 2-keto-4-methylthiobutyrate (KMTB), the alpha-ketoacid precursor of methionine in the methionine recycle pathway. Ni-containing acireductone dioxygenase (Ni-ARD) produces methylthiopropionate, carbon monoxide and formate, and does not lie on the methionine recycle pathway. The protein is Acireductone dioxygenase of Synechococcus sp. (strain RCC307).